A 194-amino-acid polypeptide reads, in one-letter code: Accessory gene regulator protein B (194 aa).

Transmembrane regions (helical) follow at residues 44 to 64 (IVVY…LTHL), 80 to 100 (SSLL…YLII), 107 to 127 (FVLL…APAA), 142 to 162 (KILS…TKEP), and 163 to 183 (VNKL…PIFF).

It belongs to the AgrB family.

Its subcellular location is the cell membrane. Functionally, essential for the production of a quorum sensing system signal molecule, the autoinducing peptide (AIP). This quorum sensing system is responsible for the regulation of the expression of virulence factor genes. Involved in the proteolytic processing of AgrD, the precursor of AIP. The sequence is that of Accessory gene regulator protein B from Staphylococcus epidermidis.